Reading from the N-terminus, the 412-residue chain is Peptidase T (412 aa).

Residue histidine 78 participates in Zn(2+) binding. Residue aspartate 80 is part of the active site. Aspartate 140 is a Zn(2+) binding site. Glutamate 174 functions as the Proton acceptor in the catalytic mechanism. The Zn(2+) site is built by glutamate 175, aspartate 197, and histidine 379.

Belongs to the peptidase M20B family. The cofactor is Zn(2+).

The protein localises to the cytoplasm. It catalyses the reaction Release of the N-terminal residue from a tripeptide.. Cleaves the N-terminal amino acid of tripeptides. The polypeptide is Peptidase T (Staphylococcus epidermidis (strain ATCC 12228 / FDA PCI 1200)).